The following is a 465-amino-acid chain: Chromosomal replication initiator protein DnaA (465 aa).

Positions 1-80 (MLWTDCLTRL…VEILVDSRPG (80 aa)) are domain I, interacts with DnaA modulators. The interval 80–127 (GAILSPAEQPATTTAALSSTPVVPQRVKKEVVEPAATQSNKILNSKKR) is domain II. A domain III, AAA+ region region spans residues 128–345 (LLNPLFTFSL…GALNKVVAIA (218 aa)). Residues Gly173, Gly175, Lys176, and Thr177 each coordinate ATP. The segment at 346–465 (RFKGSQIDLD…YKNLLRLLQS (120 aa)) is domain IV, binds dsDNA.

This sequence belongs to the DnaA family. As to quaternary structure, oligomerizes as a right-handed, spiral filament on DNA at oriC.

Its subcellular location is the cytoplasm. Functionally, plays an essential role in the initiation and regulation of chromosomal replication. ATP-DnaA binds to the origin of replication (oriC) to initiate formation of the DNA replication initiation complex once per cell cycle. Binds the DnaA box (a 9 base pair repeat at the origin) and separates the double-stranded (ds)DNA. Forms a right-handed helical filament on oriC DNA; dsDNA binds to the exterior of the filament while single-stranded (ss)DNA is stabiized in the filament's interior. The ATP-DnaA-oriC complex binds and stabilizes one strand of the AT-rich DNA unwinding element (DUE), permitting loading of DNA polymerase. After initiation quickly degrades to an ADP-DnaA complex that is not apt for DNA replication. Binds acidic phospholipids. The sequence is that of Chromosomal replication initiator protein DnaA from Acinetobacter baylyi (strain ATCC 33305 / BD413 / ADP1).